Here is a 160-residue protein sequence, read N- to C-terminus: Ureidoglycolate lyase (160 aa).

It belongs to the ureidoglycolate lyase family. In terms of assembly, homodimer. The cofactor is Ni(2+).

The catalysed reaction is (S)-ureidoglycolate = urea + glyoxylate. It functions in the pathway nitrogen metabolism; (S)-allantoin degradation. Its function is as follows. Catalyzes the catabolism of the allantoin degradation intermediate (S)-ureidoglycolate, generating urea and glyoxylate. Involved in the utilization of allantoin as nitrogen source. This is Ureidoglycolate lyase from Salmonella gallinarum (strain 287/91 / NCTC 13346).